Here is a 262-residue protein sequence, read N- to C-terminus: tRNA (guanine-N(1)-)-methyltransferase (262 aa).

S-adenosyl-L-methionine is bound by residues G113 and I137–L142.

The protein belongs to the RNA methyltransferase TrmD family. As to quaternary structure, homodimer.

The protein resides in the cytoplasm. It catalyses the reaction guanosine(37) in tRNA + S-adenosyl-L-methionine = N(1)-methylguanosine(37) in tRNA + S-adenosyl-L-homocysteine + H(+). Functionally, specifically methylates guanosine-37 in various tRNAs. This is tRNA (guanine-N(1)-)-methyltransferase from Saccharopolyspora erythraea (strain ATCC 11635 / DSM 40517 / JCM 4748 / NBRC 13426 / NCIMB 8594 / NRRL 2338).